Here is a 1456-residue protein sequence, read N- to C-terminus: Macrophage mannose receptor 1 (1456 aa).

An N-terminal signal peptide occupies residues 1–18 (MRLPLLLVFASVIPGAVL). The Extracellular portion of the chain corresponds to 19-1389 (LLDTRQFLIY…DPSKPSSNVA (1371 aa)). One can recognise a Ricin B-type lectin domain in the interval 22–142 (TRQFLIYNED…SGLWSRWKIY (121 aa)). Disulfide bonds link Cys35/Cys49 and Cys74/Cys91. N-linked (GlcNAc...) asparagine glycosylation is present at Asn104. Positions 163 to 211 (ANGATCAFPFKFENKWYADCTSAGRSDGWLWCGTTTDYDTDKLFGYCPL) constitute a Fibronectin type-II domain. Cystine bridges form between Cys168-Cys194, Cys182-Cys209, Cys247-Cys340, and Cys316-Cys332. The 117-residue stretch at 225-341 (LTSVSYQINS…CVQKLGYICK (117 aa)) folds into the C-type lectin 1 domain. N-linked (GlcNAc...) asparagine glycosylation is present at Asn344. 4 C-type lectin domains span residues 369–487 (YAGH…YICK), 511–626 (HHFY…FVCK), 655–778 (RTSL…WICQ), and 807–923 (YKDY…FICQ). Intrachain disulfides connect Cys391–Cys486 and Cys463–Cys478. N-linked (GlcNAc...) asparagine glycosylation is present at Asn529. Disulfide bonds link Cys532/Cys625, Cys600/Cys617, Cys646/Cys659, Cys680/Cys777, Cys753/Cys769, Cys828/Cys922, and Cys899/Cys914. Residues Asn926 and Asn930 are each glycosylated (N-linked (GlcNAc...) asparagine). C-type lectin domains follow at residues 952 to 1080 (YSNK…YICQ), 1102 to 1213 (YGKS…FLCK), and 1241 to 1356 (FHGH…YICK). 6 cysteine pairs are disulfide-bonded: Cys977-Cys1079, Cys1052-Cys1071, Cys1123-Cys1212, Cys1190-Cys1204, Cys1263-Cys1355, and Cys1332-Cys1347. An N-linked (GlcNAc...) asparagine glycan is attached at Asn1160. A glycan (N-linked (GlcNAc...) asparagine) is linked at Asn1205. Residues 1390-1410 (GVVIIVILLILTGAGLAAYFF) traverse the membrane as a helical segment. Residues 1411–1456 (YKKRRVHLPQEGAFENTLYFNSQSSPGTSDMKDLVGNIEQNEHSVI) lie on the Cytoplasmic side of the membrane.

As to quaternary structure, (Microbial infection) Interacts with Dengue virus. (Microbial infection) May act as a receptor for hepatitis B virus, enabling uptake of the virus in hepatic dendritic cells.

It is found in the endosome membrane. Its subcellular location is the cell membrane. In terms of biological role, mediates the endocytosis of glycoproteins by macrophages. Binds both sulfated and non-sulfated polysaccharide chains. Its function is as follows. (Microbial infection) Acts as a phagocytic receptor for bacteria, fungi and other pathogens. (Microbial infection) Acts as a receptor for Dengue virus envelope protein E. Functionally, (Microbial infection) Interacts with Hepatitis B virus envelope protein. The polypeptide is Macrophage mannose receptor 1 (MRC1) (Homo sapiens (Human)).